A 201-amino-acid polypeptide reads, in one-letter code: Glycerol-3-phosphate acyltransferase (201 aa).

Helical transmembrane passes span 10–30, 60–80, 86–106, 116–136, 139–159, and 166–186; these read MLIG…GLIL, LAAA…LIAA, AAIA…WIGF, LGVL…AWIV, LLTR…PIAL, and ALAA…RANI.

Belongs to the PlsY family. Probably interacts with PlsX.

The protein localises to the cell inner membrane. The enzyme catalyses an acyl phosphate + sn-glycerol 3-phosphate = a 1-acyl-sn-glycero-3-phosphate + phosphate. It participates in lipid metabolism; phospholipid metabolism. In terms of biological role, catalyzes the transfer of an acyl group from acyl-phosphate (acyl-PO(4)) to glycerol-3-phosphate (G3P) to form lysophosphatidic acid (LPA). This enzyme utilizes acyl-phosphate as fatty acyl donor, but not acyl-CoA or acyl-ACP. The sequence is that of Glycerol-3-phosphate acyltransferase from Brucella ovis (strain ATCC 25840 / 63/290 / NCTC 10512).